Here is a 641-residue protein sequence, read N- to C-terminus: ATP-dependent DNA helicase PIF1 (641 aa).

The tract at residues 1–180 is PINT; that stretch reads MLSGIEAAAG…LVKRPVEPQA (180 aa). A phosphoserine mark is found at Ser-27 and Ser-151. A hydrolyzes ATP in the presence of both magnesium and single-stranded DNA; weak activity in the presence of RNA or double-stranded DNA; No unwinding activity region spans residues 167 to 641; it reads PDTTLVKRPV…SDQENMDPIL (475 aa). Positions 173 to 192 are disordered; the sequence is KRPVEPQAGAEPSTEAPRWP. 228–235 contacts ATP; that stretch reads GSAGTGKS. Residues 577–596 mediate DNA binding; sequence QAYVALSRARSLQGLRVLDF. Positions 622–641 are disordered; that stretch reads LESPDDDEAASDQENMDPIL. Residues 624–641 are compositionally biased toward acidic residues; sequence SPDDDEAASDQENMDPIL.

This sequence belongs to the helicase family. PIF1 subfamily. In terms of assembly, monomer. Interacts with telomerase. Requires Mg(2+) as cofactor. Weak ubiquitous expression.

It localises to the nucleus. The protein localises to the mitochondrion. It carries out the reaction Couples ATP hydrolysis with the unwinding of duplex DNA at the replication fork by translocating in the 5'-3' direction. This creates two antiparallel DNA single strands (ssDNA). The leading ssDNA polymer is the template for DNA polymerase III holoenzyme which synthesizes a continuous strand.. The enzyme catalyses ATP + H2O = ADP + phosphate + H(+). DNA-dependent ATPase and 5'-3' DNA helicase required for the maintenance of both mitochondrial and nuclear genome stability. Efficiently unwinds G-quadruplex (G4) DNA structures and forked RNA-DNA hybrids. Resolves G4 structures, preventing replication pausing and double-strand breaks (DSBs) at G4 motifs. Involved in the maintenance of telomeric DNA. Inhibits telomere elongation, de novo telomere formation and telomere addition to DSBs via catalytic inhibition of telomerase. Reduces the processivity of telomerase by displacing active telomerase from DNA ends. Releases telomerase by unwinding the short telomerase RNA/telomeric DNA hybrid that is the intermediate in the telomerase reaction. Possesses an intrinsic strand annealing activity. This is ATP-dependent DNA helicase PIF1 from Homo sapiens (Human).